Reading from the N-terminus, the 497-residue chain is Probable gamma-aminobutyrate transaminase 2, mitochondrial (497 aa).

The transit peptide at 1-37 (MNLIKHAAFAASFQGETDCTSHASARKFSTSGSSPLL) directs the protein to the mitochondrion. 153–154 (GS) is a pyridoxal 5'-phosphate binding site. Residue Tyr186 coordinates substrate. Position 293 (Asp293) interacts with pyridoxal 5'-phosphate. Lys322 is a binding site for substrate. The residue at position 322 (Lys322) is an N6-(pyridoxal phosphate)lysine.

Belongs to the class-III pyridoxal-phosphate-dependent aminotransferase family.

Its subcellular location is the mitochondrion. It carries out the reaction 4-aminobutanoate + pyruvate = succinate semialdehyde + L-alanine. It catalyses the reaction 4-aminobutanoate + glyoxylate = succinate semialdehyde + glycine. Functionally, transaminase that degrades gamma-amino butyric acid (GABA). In Oryza sativa subsp. indica (Rice), this protein is Probable gamma-aminobutyrate transaminase 2, mitochondrial.